Here is a 115-residue protein sequence, read N- to C-terminus: Large ribosomal subunit protein uL24 (115 aa).

It belongs to the universal ribosomal protein uL24 family. As to quaternary structure, part of the 50S ribosomal subunit.

Functionally, one of two assembly initiator proteins, it binds directly to the 5'-end of the 23S rRNA, where it nucleates assembly of the 50S subunit. Its function is as follows. One of the proteins that surrounds the polypeptide exit tunnel on the outside of the subunit. The chain is Large ribosomal subunit protein uL24 from Amoebophilus asiaticus (strain 5a2).